Consider the following 309-residue polypeptide: Short-chain dehydrogenase/reductase ARMGADRAFT_1018437 (309 aa).

Residues Lys-64, Asp-86, and Asn-113 each coordinate NADP(+). Ser-167 acts as the Proton donor in catalysis. Residues Tyr-196 and Lys-200 each contribute to the NADP(+) site. The active-site Proton acceptor is Tyr-196. The Lowers pKa of active site Tyr role is filled by Lys-200.

Belongs to the short-chain dehydrogenases/reductases (SDR) family.

It functions in the pathway secondary metabolite biosynthesis. In terms of biological role, short-chain dehydrogenase/reductase, part of the gene cluster that mediates the biosynthesis of melleolides, a range of antifungal and phytotoxic polyketide derivatives composed of an orsellinic acid (OA) moiety esterified to various sesquiterpene alcohols. The first step in melleolides biosynthesis is performed by the delta(6)-protoilludene synthase PRO1 which catalyzes the cyclization of farnesyl diphosphate to protoilludene. The orsellinic acid synthase armB produces OA by condensing acetyl-CoA with 3 malonyl-CoA units in a three-round chain elongation reaction folowed by a C2-C7 ring closure. ArmB further catalyzes the trans-esterification of OA to the various sesquiterpene alcohols resulting from the hydroxylation of protoilludene. The melleolides cluster also includes 5 cytochrome P450 monooxygenases, 4 NAD(+)-dependent oxidoreductases, one flavin-dependent oxidoreductase, and one O-methyltransferase. The cytochrome P450 monooxygenases may be involved in protoilludene hydroxylation to elaborate melleolides with multiple alcohol groups, such as melleolide D, which carries alcohol functionalities at C-4, C-5, C-10, and C-13. The role of the NAD(+)-dependent enzymes remains unknown. Numerous melleolides, including arnamial, show 5'-O-methylation of the aromatic moiety which may be catalyzed by the methyltransferase encoded in the cluster. The flavin-dependent oxidoreductase might represent the dehydrogenase yielding the aldehyde in position 1 of arnamial and other melleolides. Finally, several halogenase localized outside of the cluster, are able to catalyze the transfer of a single chlorine atom to the melleolide backbone, resulting in a 6'-chloromelleolide product. The chain is Short-chain dehydrogenase/reductase ARMGADRAFT_1018437 from Armillaria gallica (Bulbous honey fungus).